The primary structure comprises 184 residues: Oligoribonuclease (184 aa).

An Exonuclease domain is found at 8–171; it reads LIWIDLEMTG…DDIRESIAEL (164 aa). Tyrosine 129 is a catalytic residue.

Belongs to the oligoribonuclease family.

It is found in the cytoplasm. In terms of biological role, 3'-to-5' exoribonuclease specific for small oligoribonucleotides. The polypeptide is Oligoribonuclease (Pasteurella multocida (strain Pm70)).